A 141-amino-acid chain; its full sequence is Large-conductance mechanosensitive channel (141 aa).

2 helical membrane passes run 16–36 (VVDLAVGVIIGGAFGKIVSSM) and 83–103 (GNFIQTVIDFTILAFVIFLMV).

It belongs to the MscL family. As to quaternary structure, homopentamer.

Its subcellular location is the cell inner membrane. Functionally, channel that opens in response to stretch forces in the membrane lipid bilayer. May participate in the regulation of osmotic pressure changes within the cell. In Cytophaga hutchinsonii (strain ATCC 33406 / DSM 1761 / CIP 103989 / NBRC 15051 / NCIMB 9469 / D465), this protein is Large-conductance mechanosensitive channel.